The following is a 214-amino-acid chain: Glutathione S-transferase F12 (214 aa).

The GST N-terminal domain occupies 2 to 82; the sequence is VVKLYGQVTA…YYATKFADQG (81 aa). Glutathione contacts are provided by residues 11–12, 40–41, 53–54, and 66–67; these read AA, QK, QV, and ES. A GST C-terminal domain is found at 89 to 214; sequence SLEHRAIVDQ…WKKLMVLAGH (126 aa).

It belongs to the GST superfamily. Phi family.

The protein localises to the cytoplasm. The protein resides in the cytosol. It catalyses the reaction RX + glutathione = an S-substituted glutathione + a halide anion + H(+). In terms of biological role, involved in the transport and/or accumulation of both anthocyanins and proanthocyanidins (PA)s in the vacuole. Functions in the cytosol to maintain the regular accumulation in the vacuole of PA precursors, such as epicatechin and glycosylated epicatechin. This Arabidopsis thaliana (Mouse-ear cress) protein is Glutathione S-transferase F12.